Consider the following 110-residue polypeptide: Holo-[acyl-carrier-protein] synthase (110 aa).

Positions 8 and 54 each coordinate Mg(2+).

The protein belongs to the P-Pant transferase superfamily. AcpS family. It depends on Mg(2+) as a cofactor.

It localises to the cytoplasm. It carries out the reaction apo-[ACP] + CoA = holo-[ACP] + adenosine 3',5'-bisphosphate + H(+). Its function is as follows. Transfers the 4'-phosphopantetheine moiety from coenzyme A to a Ser of acyl-carrier-protein. The chain is Holo-[acyl-carrier-protein] synthase from Mycoplasma mycoides subsp. mycoides SC (strain CCUG 32753 / NCTC 10114 / PG1).